Consider the following 419-residue polypeptide: Transcription factor 7 (419 aa).

Positions 1-12 (MPQLDSGGGGAG) are enriched in gly residues. The tract at residues 1–60 (MPQLDSGGGGAGRGDDLGAPDELLAFQDEGEEQDDKNRDSPVGPERDLAELKSSLVNESE) is CTNNB1-binding. 2 disordered regions span residues 1–111 (MPQL…LKAP) and 134–200 (PASG…SGFY). Composition is skewed to basic and acidic residues over residues 35 to 50 (DKNR…DLAE) and 86 to 109 (LGRE…DGLK). The segment covering 143–158 (QPQPPLHNKPGQPPHG) has biased composition (pro residues). Residues 304–372 (IKKPLNAFML…LHMQLYPGWS (69 aa)) constitute a DNA-binding region (HMG box). Positions 374–406 (RDNYGKKKRRSREKHQESTTGGKRNAFGTYPEK) are disordered. A Nuclear localization signal motif is present at residues 379-385 (KKKRRSR).

Belongs to the TCF/LEF family. In terms of assembly, binds the armadillo repeat of CTNNB1 and forms a stable complex. Binds TLE5, TLE1, TLE2, TLE3 and TLE4. Interacts with MLLT11. Interacts with DAZAP2. Interacts (via N-terminus) with SOX13; inhibits WNT-mediated transcriptional activity. As to expression, T-cell specific. Expressed in triple negative 2 subpopulations of T-cells and both the gamma-delta and alpha-beta T-cell lineages. Expressed in Il7 receptor positive innate-like T-cells in the mesenteric lymph nodes and spleen (at protein level).

Its subcellular location is the nucleus. Functionally, transcriptional activator involved in T-cell lymphocyte differentiation. Necessary for the survival of CD4(+) CD8(+) immature thymocytes. Isoforms lacking the N-terminal CTNNB1 binding domain cannot fulfill this role. Binds to the T-lymphocyte-specific enhancer element (5'-WWCAAAG-3') found in the promoter of the CD3E gene. Represses expression of the T-cell receptor gamma gene in alpha-beta T-cell lineages. Inhibits the developmental program of IL17A effector gamma-delta T-cell subsets via regulating the transcription of T-cell lineage effector proteins. Required for the development of natural killer receptor-positive lymphoid tissue inducer T-cells. TLE1, TLE2, TLE3 and TLE4 repress transactivation mediated by TCF7 and CTNNB1. May also act as feedback transcriptional repressor of CTNNB1 and TCF7L2 target genes. The sequence is that of Transcription factor 7 from Mus musculus (Mouse).